The sequence spans 286 residues: Beta-lactamase SHV-13 (286 aa).

The first 21 residues, 1-21 (MRYIRLCIISLLATLPLAVHA), serve as a signal peptide directing secretion. Serine 66 (acyl-ester intermediate) is an active-site residue. Cysteine 73 and cysteine 119 form a disulfide bridge. The active-site Proton acceptor is glutamate 164. 230 to 232 (KTG) provides a ligand contact to substrate.

Belongs to the class-A beta-lactamase family.

The enzyme catalyses a beta-lactam + H2O = a substituted beta-amino acid. Inhibited 16-fold better by the beta-lactamase inhibitor clavulanic acid than by tazobactam. Broad spectrum beta-lactamase which hydrolyzes penicillins, as well as cephalosporins except cephamycins. Also hydrolyzes aztreonam, but not imipenem. Confers highly resistance to ceftazidime, cefotaxime, aztreonam and piperacillin. This chain is Beta-lactamase SHV-13 (bla), found in Klebsiella pneumoniae.